A 289-amino-acid chain; its full sequence is UPF0761 membrane protein ESA_04062 (289 aa).

The next 6 helical transmembrane spans lie at 44-64, 104-124, 140-160, 183-203, 215-235, and 244-264; these read LLSL…FPMF, VGAL…DSAL, FAVY…SLVI, IFPL…VPTT, LVAA…ITMF, and VLAV…IVLL.

Belongs to the UPF0761 family.

It is found in the cell inner membrane. The protein is UPF0761 membrane protein ESA_04062 of Cronobacter sakazakii (strain ATCC BAA-894) (Enterobacter sakazakii).